Consider the following 325-residue polypeptide: Delta(1)-pyrroline-2-carboxylate reductase (325 aa).

Belongs to the ornithine cyclodeaminase/mu-crystallin family.

It carries out the reaction L-proline + NAD(+) = 1-pyrroline-2-carboxylate + NADH + H(+). The catalysed reaction is L-proline + NADP(+) = 1-pyrroline-2-carboxylate + NADPH + H(+). Functionally, catalyzes the reduction of Delta(1)-pyrroline-2-carboxylate (Pyr2C) to L-proline, using preferentially NADPH over NADH as the electron donor. Is likely involved in a degradation pathway that converts trans-3-hydroxy-L-proline (t3LHyp) to L-proline, which allows B.cereus to grow on t3LHyp as a sole carbon source. The polypeptide is Delta(1)-pyrroline-2-carboxylate reductase (Bacillus cereus (strain ATCC 14579 / DSM 31 / CCUG 7414 / JCM 2152 / NBRC 15305 / NCIMB 9373 / NCTC 2599 / NRRL B-3711)).